The chain runs to 196 residues: Charged multivesicular body protein 1a (196 aa).

The stretch at 5 to 41 (LFQLKFTAKQLEKLAKKAEKDSNTEQAKVKKALQQKN) forms a coiled coil. Positions 170–181 (QGASSVGESSTR) are enriched in polar residues. The tract at residues 170–196 (QGASSVGESSTRTQEDQLSRRLASLRN) is disordered. Residues 185–195 (DQLSRRLASLR) carry the MIT-interacting motif motif.

Belongs to the SNF7 family. As to quaternary structure, probable peripherally associated component of the endosomal sorting required for transport complex III (ESCRT-III).

It is found in the cytoplasm. The protein resides in the endosome membrane. In terms of biological role, probable peripherally associated component of the endosomal sorting required for transport complex III (ESCRT-III) which is involved in multivesicular bodies (MVBs) formation and sorting of endosomal cargo proteins into MVBs. MVBs contain intraluminal vesicles (ILVs) that are generated by invagination and scission from the limiting membrane of the endosome and mostly are delivered to lysosomes enabling degradation of membrane proteins, such as stimulated growth factor receptors, lysosomal enzymes and lipids. In Xenopus laevis (African clawed frog), this protein is Charged multivesicular body protein 1a (chmp1a).